Here is a 315-residue protein sequence, read N- to C-terminus: NADH-cytochrome b5 reductase-like (315 aa).

One can recognise an Oxidoreductase-like domain in the interval R19–K55. In terms of domain architecture, FAD-binding FR-type spans E75–K177. FAD contacts are provided by residues E157–G172 and G182–T214.

The protein belongs to the flavoprotein pyridine nucleotide cytochrome reductase family. Requires FAD as cofactor.

It catalyses the reaction 2 Fe(III)-[cytochrome b5] + NADH = 2 Fe(II)-[cytochrome b5] + NAD(+) + H(+). NADH-cytochrome b5 reductases are involved in desaturation and elongation of fatty acids, cholesterol biosynthesis, drug metabolism, and, in erythrocyte, methemoglobin reduction. This Homo sapiens (Human) protein is NADH-cytochrome b5 reductase-like (CYB5RL).